An 848-amino-acid chain; its full sequence is Protein translocase subunit SecA (848 aa).

Residues Q86, 104-108 (GEGKT), and D508 contribute to the ATP site. Residues C833, C835, C844, and C845 each coordinate Zn(2+).

Belongs to the SecA family. As to quaternary structure, monomer and homodimer. Part of the essential Sec protein translocation apparatus which comprises SecA, SecYEG and auxiliary proteins SecDF. Other proteins may also be involved. The cofactor is Zn(2+).

It is found in the cell membrane. It localises to the cytoplasm. It carries out the reaction ATP + H2O + cellular proteinSide 1 = ADP + phosphate + cellular proteinSide 2.. In terms of biological role, part of the Sec protein translocase complex. Interacts with the SecYEG preprotein conducting channel. Has a central role in coupling the hydrolysis of ATP to the transfer of proteins into and across the cell membrane, serving as an ATP-driven molecular motor driving the stepwise translocation of polypeptide chains across the membrane. This chain is Protein translocase subunit SecA, found in Caldicellulosiruptor saccharolyticus (strain ATCC 43494 / DSM 8903 / Tp8T 6331).